Reading from the N-terminus, the 109-residue chain is Probable guanidinium efflux system subunit GdnC (109 aa).

4 consecutive transmembrane segments (helical) span residues 3-23 (WGSV…LKHA), 26-46 (ALEW…LVKA), 55-75 (VYAV…IALF), and 81-101 (IAKL…KLVT).

The protein belongs to the drug/metabolite transporter (DMT) superfamily. Small multidrug resistance (SMR) (TC 2.A.7.1) family. YkkC/YkkD subfamily. In terms of assembly, the efflux pump is composed of GdnC and GdnD.

It is found in the cell membrane. Its function is as follows. Probably involved in guanidinium transport. This is Probable guanidinium efflux system subunit GdnC from Bacillus licheniformis (strain ATCC 14580 / DSM 13 / JCM 2505 / CCUG 7422 / NBRC 12200 / NCIMB 9375 / NCTC 10341 / NRRL NRS-1264 / Gibson 46).